We begin with the raw amino-acid sequence, 300 residues long: Estradiol 17-beta-dehydrogenase 11 (300 aa).

A signal peptide spans 1-19 (MKFLLDVLLLLPLLIVCSL). 40–64 (LITGAGHGIGRLTAYEFAKLKSKLV) provides a ligand contact to NADP(+). Ser-172 is a substrate binding site. The active-site Proton acceptor is the Tyr-185.

This sequence belongs to the short-chain dehydrogenases/reductases (SDR) family. 17-beta-HSD 3 subfamily.

The protein resides in the endoplasmic reticulum. Its subcellular location is the lipid droplet. It carries out the reaction 17beta-estradiol + NAD(+) = estrone + NADH + H(+). It catalyses the reaction 17beta-estradiol + NADP(+) = estrone + NADPH + H(+). Its function is as follows. Can convert androstan-3-alpha,17-beta-diol (3-alpha-diol) to androsterone in vitro, suggesting that it may participate in androgen metabolism during steroidogenesis. May act by metabolizing compounds that stimulate steroid synthesis and/or by generating metabolites that inhibit it. Has no activity toward DHEA (dehydroepiandrosterone), or A-dione (4-androste-3,17-dione), and only a slight activity toward testosterone to A-dione. This is Estradiol 17-beta-dehydrogenase 11 (HSD17B11) from Pongo abelii (Sumatran orangutan).